The following is a 337-amino-acid chain: Eukaryotic translation initiation factor 3 subunit H (337 aa).

Residues 21 to 153 (VQCDGLAVMK…LKAYRLTPQA (133 aa)) enclose the MPN domain.

This sequence belongs to the eIF-3 subunit H family. As to quaternary structure, component of the eukaryotic translation initiation factor 3 (eIF-3) complex. The eIF-3 complex interacts with pix. Interacts with mxt.

The protein localises to the cytoplasm. Component of the eukaryotic translation initiation factor 3 (eIF-3) complex, which is involved in protein synthesis of a specialized repertoire of mRNAs and, together with other initiation factors, stimulates binding of mRNA and methionyl-tRNAi to the 40S ribosome. The eIF-3 complex specifically targets and initiates translation of a subset of mRNAs involved in cell proliferation. This chain is Eukaryotic translation initiation factor 3 subunit H, found in Drosophila ananassae (Fruit fly).